The sequence spans 218 residues: Cytidylate kinase (218 aa).

10-18 (GPAGSGKST) provides a ligand contact to ATP.

Belongs to the cytidylate kinase family. Type 1 subfamily.

The protein localises to the cytoplasm. The enzyme catalyses CMP + ATP = CDP + ADP. The catalysed reaction is dCMP + ATP = dCDP + ADP. In Fusobacterium nucleatum subsp. nucleatum (strain ATCC 25586 / DSM 15643 / BCRC 10681 / CIP 101130 / JCM 8532 / KCTC 2640 / LMG 13131 / VPI 4355), this protein is Cytidylate kinase.